We begin with the raw amino-acid sequence, 83 residues long: MARVTVEDCLDNVDNRFQLVMVATQRSRQLARGSRDAQLPWENDKPTVMALREIAAGLVDRSILNEAVEPPAAKPRPEREFND.

Belongs to the RNA polymerase subunit omega family. As to quaternary structure, the RNAP catalytic core consists of 2 alpha, 1 beta, 1 beta' and 1 omega subunit. When a sigma factor is associated with the core the holoenzyme is formed, which can initiate transcription.

The catalysed reaction is RNA(n) + a ribonucleoside 5'-triphosphate = RNA(n+1) + diphosphate. Promotes RNA polymerase assembly. Latches the N- and C-terminal regions of the beta' subunit thereby facilitating its interaction with the beta and alpha subunits. This is DNA-directed RNA polymerase subunit omega from Chromohalobacter salexigens (strain ATCC BAA-138 / DSM 3043 / CIP 106854 / NCIMB 13768 / 1H11).